The chain runs to 244 residues: Probable transcriptional regulatory protein MMOB1910 (244 aa).

It belongs to the TACO1 family.

The protein resides in the cytoplasm. The chain is Probable transcriptional regulatory protein MMOB1910 from Mycoplasma mobile (strain ATCC 43663 / 163K / NCTC 11711) (Mesomycoplasma mobile).